Reading from the N-terminus, the 714-residue chain is Fatty acid oxidation complex subunit alpha (714 aa).

The segment at 1-190 (MEMASAFTLN…KLGLVDDVVP (190 aa)) is enoyl-CoA hydratase. The interval 306–714 (APLNSVGILG…FWKTTATDLQ (409 aa)) is 3-hydroxyacyl-CoA dehydrogenase.

The protein in the N-terminal section; belongs to the enoyl-CoA hydratase/isomerase family. In the central section; belongs to the 3-hydroxyacyl-CoA dehydrogenase family. In terms of assembly, heterotetramer of two alpha chains (FadJ) and two beta chains (FadI).

Its subcellular location is the cytoplasm. It catalyses the reaction a (3S)-3-hydroxyacyl-CoA = a (2E)-enoyl-CoA + H2O. The catalysed reaction is a 4-saturated-(3S)-3-hydroxyacyl-CoA = a (3E)-enoyl-CoA + H2O. The enzyme catalyses a (3S)-3-hydroxyacyl-CoA + NAD(+) = a 3-oxoacyl-CoA + NADH + H(+). It carries out the reaction (3S)-3-hydroxybutanoyl-CoA = (3R)-3-hydroxybutanoyl-CoA. Its pathway is lipid metabolism; fatty acid beta-oxidation. In terms of biological role, catalyzes the formation of a hydroxyacyl-CoA by addition of water on enoyl-CoA. Also exhibits 3-hydroxyacyl-CoA epimerase and 3-hydroxyacyl-CoA dehydrogenase activities. The sequence is that of Fatty acid oxidation complex subunit alpha from Escherichia coli O6:K15:H31 (strain 536 / UPEC).